The sequence spans 259 residues: MRFLILFLTLSLGGIDAAPPVQSRILGGFKCEKNSQPWQVAVYYLDEYLCGGVLLDRNWVLTAAHCYEDKYNIWLGKNKLFQDEPSAQHRLVSKSFPHPDFNMSLLQSVPTGADLSNDLMLLRLSKPADITDVVKPIDLPTTEPKLGSTCLASGWGSINQLIYQNPNDLQCVSIKLHPNEVCVKAHILKVTDVMLCAGEMNGGKDTCKGDSGGPLICDGVLQGITSWGSTPCGEPNAPAIYTKLIKFTSWIKDTMAKNP.

The first 17 residues, M1 to A17, serve as a signal peptide directing secretion. A propeptide spans A18 to R24 (activation peptide). The 232-residue stretch at I25–A256 folds into the Peptidase S1 domain. Cystine bridges form between C31–C171, C50–C66, C150–C217, C182–C196, and C207–C232. H65 acts as the Charge relay system in catalysis. N102 is a glycosylation site (N-linked (GlcNAc...) asparagine). D118 (charge relay system) is an active-site residue. Catalysis depends on S211, which acts as the Charge relay system.

It belongs to the peptidase S1 family. Kallikrein subfamily.

It carries out the reaction Preferential cleavage of Arg-|-Xaa bonds in small molecule substrates. Highly selective action to release kallidin (lysyl-bradykinin) from kininogen involves hydrolysis of Met-|-Xaa or Leu-|-Xaa.. Its function is as follows. Glandular kallikreins cleave Met-Lys and Arg-Ser bonds in kininogen to release Lys-bradykinin. The polypeptide is Kallikrein 1-related peptidase b22 (Klk1b22) (Mus musculus (Mouse)).